A 315-amino-acid polypeptide reads, in one-letter code: Methionyl-tRNA formyltransferase (315 aa).

Ser112–Pro115 contacts (6S)-5,6,7,8-tetrahydrofolate.

Belongs to the Fmt family.

The catalysed reaction is L-methionyl-tRNA(fMet) + (6R)-10-formyltetrahydrofolate = N-formyl-L-methionyl-tRNA(fMet) + (6S)-5,6,7,8-tetrahydrofolate + H(+). In terms of biological role, attaches a formyl group to the free amino group of methionyl-tRNA(fMet). The formyl group appears to play a dual role in the initiator identity of N-formylmethionyl-tRNA by promoting its recognition by IF2 and preventing the misappropriation of this tRNA by the elongation apparatus. This is Methionyl-tRNA formyltransferase from Leptospira borgpetersenii serovar Hardjo-bovis (strain JB197).